We begin with the raw amino-acid sequence, 297 residues long: GTPase Era (297 aa).

One can recognise an Era-type G domain in the interval 3-171; sequence KSGFVSIVGR…IKVIQNYLEE (169 aa). Residues 11 to 18 are G1; that stretch reads GRPNVGKS. 11-18 lines the GTP pocket; it reads GRPNVGKS. The tract at residues 37–41 is G2; that stretch reads QTTRN. Residues 58–61 are G3; it reads DTPG. GTP contacts are provided by residues 58–62 and 120–123; these read DTPGI and NKID. The interval 120 to 123 is G4; sequence NKID. Residues 150–152 form a G5 region; sequence ISA. In terms of domain architecture, KH type-2 spans 194–280; it reads IREKVLHYLN…NLQLWVKVKE (87 aa).

It belongs to the TRAFAC class TrmE-Era-EngA-EngB-Septin-like GTPase superfamily. Era GTPase family. Monomer.

It is found in the cytoplasm. The protein resides in the cell membrane. In terms of biological role, an essential GTPase that binds both GDP and GTP, with rapid nucleotide exchange. Plays a role in 16S rRNA processing and 30S ribosomal subunit biogenesis and possibly also in cell cycle regulation and energy metabolism. This Clostridioides difficile (strain 630) (Peptoclostridium difficile) protein is GTPase Era.